The sequence spans 25 residues: Snake venom metalloproteinase catroxase (25 aa).

E9 lines the Ca(2+) pocket.

The protein belongs to the venom metalloproteinase (M12B) family. In terms of assembly, monomer. Zn(2+) serves as cofactor. As to expression, expressed by the venom gland.

The protein localises to the secreted. With respect to regulation, inhibited by EDTA, beta-mercaptoethanol, but not by PMSF, p-tosyl-L-phenylalanine chloromethyl ketone, p-tosyl-L-lysine chloromethyl ketone, soybean trypsin inhibitor and aprotinin. Metalloprotease that is highly active against alpha-(FGA) and beta-chains (FGB) of fibrinogen molecules. The protein is Snake venom metalloproteinase catroxase of Crotalus atrox (Western diamondback rattlesnake).